The sequence spans 416 residues: Phosphoribosylamine--glycine ligase (416 aa).

Residues 105–310 form the ATP-grasp domain; sequence KSFLKKYRIK…PLELILAATQ (206 aa). 131 to 192 lines the ATP pocket; the sequence is IYSLTPPIVV…EEFLDGYELS (62 aa). Mg(2+) is bound by residues Glu281 and Asn283.

Belongs to the GARS family. Mg(2+) serves as cofactor. Requires Mn(2+) as cofactor.

It carries out the reaction 5-phospho-beta-D-ribosylamine + glycine + ATP = N(1)-(5-phospho-beta-D-ribosyl)glycinamide + ADP + phosphate + H(+). It functions in the pathway purine metabolism; IMP biosynthesis via de novo pathway; N(1)-(5-phospho-D-ribosyl)glycinamide from 5-phospho-alpha-D-ribose 1-diphosphate: step 2/2. This is Phosphoribosylamine--glycine ligase from Campylobacter jejuni subsp. jejuni serotype O:2 (strain ATCC 700819 / NCTC 11168).